Reading from the N-terminus, the 126-residue chain is Aspartate 1-decarboxylase (126 aa).

Residue S25 is the Schiff-base intermediate with substrate; via pyruvic acid of the active site. At S25 the chain carries Pyruvic acid (Ser). Position 57 (T57) interacts with substrate. Y58 (proton donor) is an active-site residue. A substrate-binding site is contributed by 73–75; it reads GAA.

The protein belongs to the PanD family. As to quaternary structure, heterooctamer of four alpha and four beta subunits. It depends on pyruvate as a cofactor. In terms of processing, is synthesized initially as an inactive proenzyme, which is activated by self-cleavage at a specific serine bond to produce a beta-subunit with a hydroxyl group at its C-terminus and an alpha-subunit with a pyruvoyl group at its N-terminus.

The protein localises to the cytoplasm. The catalysed reaction is L-aspartate + H(+) = beta-alanine + CO2. It functions in the pathway cofactor biosynthesis; (R)-pantothenate biosynthesis; beta-alanine from L-aspartate: step 1/1. Functionally, catalyzes the pyruvoyl-dependent decarboxylation of aspartate to produce beta-alanine. The chain is Aspartate 1-decarboxylase from Photorhabdus laumondii subsp. laumondii (strain DSM 15139 / CIP 105565 / TT01) (Photorhabdus luminescens subsp. laumondii).